The following is a 288-amino-acid chain: MKKIAIFAKVHDPRALAVAEELIEWLAARGVTAHVEEHLSKRLRRTTLAESSESTEIAADADLVVVLGGDGTLIAAARLVGERDIPILAVNLGSLGFLTEITLDELYPSVERCLAGDFEVTERMMLMASVERSGEVVELHRVLNDVVINKGALARIIDMETSVNCRYLTTFKADGLIVSTPTGSTGYSLSANGPILHPELECISITPICPHTLTNRPVVVAADSHIAIKLNYAPDESVFLTLDGQVGMKLLSGDVVQITKAAHVTRLIRSRSKDYFEVLRTKLKWGER.

Asp-70 serves as the catalytic Proton acceptor. NAD(+) is bound by residues 70–71 (DG), 144–145 (ND), Arg-155, Lys-172, Asp-174, 185–190 (TGYSLS), and Gln-245.

This sequence belongs to the NAD kinase family. A divalent metal cation is required as a cofactor.

The protein localises to the cytoplasm. The enzyme catalyses NAD(+) + ATP = ADP + NADP(+) + H(+). Involved in the regulation of the intracellular balance of NAD and NADP, and is a key enzyme in the biosynthesis of NADP. Catalyzes specifically the phosphorylation on 2'-hydroxyl of the adenosine moiety of NAD to yield NADP. In Geobacter sp. (strain M21), this protein is NAD kinase.